The chain runs to 261 residues: Cytochrome c oxidase subunit 3 (261 aa).

Over 1-15 the chain is Mitochondrial matrix; that stretch reads MTHQTHAYHMVDPSP. The chain crosses the membrane as a helical span at residues 16 to 34; sequence WPLTGALSALLMTSGLTMW. The Mitochondrial intermembrane portion of the chain corresponds to 35–40; the sequence is FHYHSV. Residues 41 to 66 traverse the membrane as a helical segment; sequence TLLLLGLTTNILTMFQWWRDVVREGT. The Mitochondrial matrix portion of the chain corresponds to 67 to 72; it reads FQGHHT. The chain crosses the membrane as a helical span at residues 73–105; the sequence is PVVQESLRYGMILFITSEVLFFTGFFWAFYHSS. At 106–128 the chain is on the mitochondrial intermembrane side; that stretch reads LAPTPELGSYWPPVGVYPLNPLE. A helical transmembrane segment spans residues 129–152; that stretch reads VPLLNTSVLLASGVTITWAHHSLM. The Mitochondrial matrix segment spans residues 153–155; that stretch reads EGN. The helical transmembrane segment at 156 to 183 threads the bilayer; it reads RKNMLQALLITILLGVYFTLLQMFEYYE. Over 184–190 the chain is Mitochondrial intermembrane; it reads ASFTISD. A helical membrane pass occupies residues 191–223; the sequence is GIYGSTFFVTTGFHGLHVIIGSTFLLTCFIRQL. Residues 224–232 lie on the Mitochondrial matrix side of the membrane; that stretch reads KFHFTSNHH. Residues 233-256 form a helical membrane-spanning segment; it reads FGFEAAAWYWHFVDVVWLFLYLSI. Residues 257 to 261 lie on the Mitochondrial intermembrane side of the membrane; that stretch reads YWWGS.

This sequence belongs to the cytochrome c oxidase subunit 3 family. In terms of assembly, component of the cytochrome c oxidase (complex IV, CIV), a multisubunit enzyme composed of 14 subunits. The complex is composed of a catalytic core of 3 subunits MT-CO1, MT-CO2 and MT-CO3, encoded in the mitochondrial DNA, and 11 supernumerary subunits COX4I, COX5A, COX5B, COX6A, COX6B, COX6C, COX7A, COX7B, COX7C, COX8 and NDUFA4, which are encoded in the nuclear genome. The complex exists as a monomer or a dimer and forms supercomplexes (SCs) in the inner mitochondrial membrane with NADH-ubiquinone oxidoreductase (complex I, CI) and ubiquinol-cytochrome c oxidoreductase (cytochrome b-c1 complex, complex III, CIII), resulting in different assemblies (supercomplex SCI(1)III(2)IV(1) and megacomplex MCI(2)III(2)IV(2)).

It localises to the mitochondrion inner membrane. The catalysed reaction is 4 Fe(II)-[cytochrome c] + O2 + 8 H(+)(in) = 4 Fe(III)-[cytochrome c] + 2 H2O + 4 H(+)(out). In terms of biological role, component of the cytochrome c oxidase, the last enzyme in the mitochondrial electron transport chain which drives oxidative phosphorylation. The respiratory chain contains 3 multisubunit complexes succinate dehydrogenase (complex II, CII), ubiquinol-cytochrome c oxidoreductase (cytochrome b-c1 complex, complex III, CIII) and cytochrome c oxidase (complex IV, CIV), that cooperate to transfer electrons derived from NADH and succinate to molecular oxygen, creating an electrochemical gradient over the inner membrane that drives transmembrane transport and the ATP synthase. Cytochrome c oxidase is the component of the respiratory chain that catalyzes the reduction of oxygen to water. Electrons originating from reduced cytochrome c in the intermembrane space (IMS) are transferred via the dinuclear copper A center (CU(A)) of subunit 2 and heme A of subunit 1 to the active site in subunit 1, a binuclear center (BNC) formed by heme A3 and copper B (CU(B)). The BNC reduces molecular oxygen to 2 water molecules using 4 electrons from cytochrome c in the IMS and 4 protons from the mitochondrial matrix. This Loxodonta africana (African elephant) protein is Cytochrome c oxidase subunit 3 (MT-CO3).